A 393-amino-acid polypeptide reads, in one-letter code: ATP phosphoribosyltransferase regulatory subunit (393 aa).

The protein belongs to the class-II aminoacyl-tRNA synthetase family. HisZ subfamily. As to quaternary structure, heteromultimer composed of HisG and HisZ subunits.

The protein localises to the cytoplasm. Its pathway is amino-acid biosynthesis; L-histidine biosynthesis; L-histidine from 5-phospho-alpha-D-ribose 1-diphosphate: step 1/9. In terms of biological role, required for the first step of histidine biosynthesis. May allow the feedback regulation of ATP phosphoribosyltransferase activity by histidine. This Marinobacter nauticus (strain ATCC 700491 / DSM 11845 / VT8) (Marinobacter aquaeolei) protein is ATP phosphoribosyltransferase regulatory subunit.